Reading from the N-terminus, the 311-residue chain is Glutaminase (311 aa).

Residues Ser66, Asn116, Glu162, Asn169, Tyr193, Tyr245, and Val263 each coordinate substrate.

The protein belongs to the glutaminase family. Homotetramer.

It catalyses the reaction L-glutamine + H2O = L-glutamate + NH4(+). The protein is Glutaminase of Rhodopseudomonas palustris (strain TIE-1).